The sequence spans 204 residues: Protein DESIGUAL 4 (204 aa).

4 helical membrane-spanning segments follow: residues 13 to 33 (IITV…VAGF), 60 to 80 (FVLG…ANVI), 107 to 127 (CLFL…NGIW), and 143 to 163 (VFSI…IYYI). The tract at residues 177 to 204 (KPNKTKPSELKPIPTEPNEAEPNSTPNP) is disordered. Residue N179 is glycosylated (N-linked (GlcNAc...) asparagine).

The protein belongs to the DESIGUAL family. As to expression, only expressed in inflorescences.

Its subcellular location is the endoplasmic reticulum membrane. In Arabidopsis thaliana (Mouse-ear cress), this protein is Protein DESIGUAL 4.